The chain runs to 150 residues: Leukotriene C4 synthase (150 aa).

The Cytoplasmic segment spans residues 1-6; that stretch reads MKDEVA. A helical membrane pass occupies residues 7-27; the sequence is LLASVTLLGVLLQAYFSLQVI. Over 28–48 the chain is Lumenal; that stretch reads SARRAFRVSPPLTTGPPEFER. R30 is a binding site for glutathione. R31 (proton donor) is an active-site residue. At S36 the chain carries Phosphoserine. The chain crosses the membrane as a helical span at residues 49-69; the sequence is IYRAQVNCSEYFPLFLAMLWV. Residues 51 to 55 and 58 to 59 each bind glutathione; these read RAQVN and EY. The Cytoplasmic portion of the chain corresponds to 70–73; it reads AGIF. The chain crosses the membrane as a helical span at residues 74–94; the sequence is FHEGAAALCGLVYLFARLRYF. Residue 93–97 coordinates glutathione; it reads YFQGY. At 95–104 the chain is on the lumenal side; sequence QGYARSAQQR. The active-site Proton acceptor is R104. A helical membrane pass occupies residues 105 to 124; it reads LAPLYASARALWLLVALAAL. At 125-150 the chain is on the cytoplasmic side; that stretch reads GLLAHFLPAELRAALLGQLRKLLLRS.

The protein belongs to the MAPEG family. Homotrimer. Interacts with ALOX5AP and ALOX5. Post-translationally, phosphorylation at Ser-36 by RPS6KB1 inhibits the leukotriene-C4 synthase activity.

The protein resides in the nucleus outer membrane. It localises to the endoplasmic reticulum membrane. It is found in the nucleus membrane. The catalysed reaction is leukotriene C4 = leukotriene A4 + glutathione. It catalyses the reaction (13S,14S)-epoxy-(4Z,7Z,9E,11E,16Z,19Z)-docosahexaenoate + glutathione = (13R)-S-glutathionyl-(14S)-hydroxy-(4Z,7Z,9E,11E,16Z,19Z)-docosahexaenoate. The protein operates within lipid metabolism; leukotriene C4 biosynthesis. Its activity is regulated as follows. Inhibited by MK886. In terms of biological role, catalyzes the conjugation of leukotriene A4 with reduced glutathione (GSH) to form leukotriene C4 with high specificity. Can also catalyze the transfer of a glutathionyl group from glutathione (GSH) to 13(S),14(S)-epoxy-docosahexaenoic acid to form maresin conjugate in tissue regeneration 1 (MCTR1), a bioactive lipid mediator that possess potent anti-inflammatory and proresolving actions. This chain is Leukotriene C4 synthase (LTC4S), found in Bos taurus (Bovine).